The primary structure comprises 450 residues: IMP-specific 5'-nucleotidase 1 (450 aa).

H144 lines the ATP pocket. D172 acts as the Nucleophile in catalysis. IMP-binding residues include D172, D174, D180, T208, D376, and K384. The Mg(2+) site is built by D172 and D174. D174 functions as the Proton donor in the catalytic mechanism. Position 411 (D411) interacts with Mg(2+).

It belongs to the ISN1 family. Homotetramer. Requires Mg(2+) as cofactor.

It carries out the reaction IMP + H2O = inosine + phosphate. Its activity is regulated as follows. Allosterically activated by ATP. ATP binding is a prerequisite to magnesium and substrate binding. ATP binds to 2 of the subunits in the homotetramer inducing a closure of these 2 subunits and the release of the C-terminal loop, thereby activating the enzyme. Functionally, IMP-specific 5'-nucleotidase involved in IMP (inosine 5'-phosphate) degradation. In Saccharomyces cerevisiae (strain ATCC 204508 / S288c) (Baker's yeast), this protein is IMP-specific 5'-nucleotidase 1 (ISN1).